Consider the following 445-residue polypeptide: Trigger factor (445 aa).

The PPIase FKBP-type domain occupies 171–256 (NDIVIIDFKG…VHVVNEVETP (86 aa)).

Belongs to the FKBP-type PPIase family. Tig subfamily.

It is found in the cytoplasm. The catalysed reaction is [protein]-peptidylproline (omega=180) = [protein]-peptidylproline (omega=0). In terms of biological role, involved in protein export. Acts as a chaperone by maintaining the newly synthesized protein in an open conformation. Functions as a peptidyl-prolyl cis-trans isomerase. In Malacoplasma penetrans (strain HF-2) (Mycoplasma penetrans), this protein is Trigger factor.